Consider the following 108-residue polypeptide: uncharacterized protein (108 aa).

This sequence belongs to the UPF0440 family.

This is an uncharacterized protein from Thermococcus kodakarensis (strain ATCC BAA-918 / JCM 12380 / KOD1) (Pyrococcus kodakaraensis (strain KOD1)).